A 164-amino-acid chain; its full sequence is Ubiquitin-fold modifier-conjugating enzyme 1 (164 aa).

Catalysis depends on cysteine 116, which acts as the Glycyl thioester intermediate.

The protein belongs to the ubiquitin-conjugating enzyme family. UFC1 subfamily.

In terms of biological role, E2-like enzyme which forms an intermediate with UFM1 via a thioester linkage. This chain is Ubiquitin-fold modifier-conjugating enzyme 1, found in Drosophila persimilis (Fruit fly).